The primary structure comprises 209 residues: Flavin prenyltransferase UbiX (209 aa).

Residues 13–15 (GAS), serine 39, 104–107 (STGT), cysteine 116, and arginine 139 contribute to the FMN site. The dimethylallyl phosphate site is built by tyrosine 169 and arginine 185.

Belongs to the UbiX/PAD1 family.

It carries out the reaction dimethylallyl phosphate + FMNH2 = prenylated FMNH2 + phosphate. In terms of biological role, flavin prenyltransferase that catalyzes the synthesis of the prenylated FMN cofactor (prenyl-FMN) for 4-hydroxy-3-polyprenylbenzoic acid decarboxylase UbiD. The prenyltransferase is metal-independent and links a dimethylallyl moiety from dimethylallyl monophosphate (DMAP) to the flavin N5 and C6 atoms of FMN. This is Flavin prenyltransferase UbiX from Pseudomonas aeruginosa (strain ATCC 15692 / DSM 22644 / CIP 104116 / JCM 14847 / LMG 12228 / 1C / PRS 101 / PAO1).